We begin with the raw amino-acid sequence, 75 residues long: Pro-glucagon (75 aa).

It belongs to the glucagon family.

The protein localises to the secreted. Its function is as follows. Plays a key role in glucose metabolism and homeostasis. Regulates blood glucose by increasing gluconeogenesis and decreasing glycolysis. The protein is Pro-glucagon (gcg) of Amia calva (Bowfin).